A 153-amino-acid chain; its full sequence is Transcription antitermination protein NusB (153 aa).

The protein belongs to the NusB family.

In terms of biological role, involved in transcription antitermination. Required for transcription of ribosomal RNA (rRNA) genes. Binds specifically to the boxA antiterminator sequence of the ribosomal RNA (rrn) operons. This Clostridium tetani (strain Massachusetts / E88) protein is Transcription antitermination protein NusB.